The following is a 387-amino-acid chain: Proline-rich protein 5 (387 aa).

2 interaction with RICTOR regions span residues 10 to 96 and 189 to 219; these read MSSP…LTKG and HESR…YGLY. Residues 13 to 34 are disordered; it reads PSLSDLGKREPGAAGTDERGTQ. Over residues 18 to 33 the composition is skewed to basic and acidic residues; that stretch reads LGKREPGAAGTDERGT. Ser-253 is subject to Phosphoserine. Residues 262–387 are disordered; it reads NPVAEHEAEG…EAPGGRPSVV (126 aa). Residues 305–314 are compositionally biased toward polar residues; the sequence is SGTFRSSPTP. Residue Ser-373 is modified to Phosphoserine.

Belongs to the PROTOR family. As to quaternary structure, associated component of the mechanistic target of rapamycin complex 2 (mTORC2). Binds directly to MTOR and RICTOR within the TORC2 complex. As to expression, ubiquitously expressed. Expressed at high levels in kidney.

Associated subunit of mTORC2, which regulates cell growth and survival in response to hormonal signals. mTORC2 is activated by growth factors, but, in contrast to mTORC1, seems to be nutrient-insensitive. mTORC2 seems to function upstream of Rho GTPases to regulate the actin cytoskeleton, probably by activating one or more Rho-type guanine nucleotide exchange factors. PRR5 plays an important role in regulation of PDGFRB expression and in modulation of platelet-derived growth factor signaling. May act as a tumor suppressor in breast cancer. The chain is Proline-rich protein 5 from Mus musculus (Mouse).